A 320-amino-acid polypeptide reads, in one-letter code: ATP-dependent 6-phosphofructokinase (320 aa).

Gly12 is an ATP binding site. ADP is bound by residues 22–26 (RGVVR) and 55–60 (RYSVSD). ATP-binding positions include 73–74 (RF) and 103–106 (GDGS). Asp104 is a binding site for Mg(2+). Position 126–128 (126–128 (TID)) interacts with substrate. Asp128 serves as the catalytic Proton acceptor. Arg155 serves as a coordination point for ADP. Substrate is bound by residues Arg163 and 170 to 172 (MGR). Residues 186–188 (GCE), Lys212, and 214–216 (KKH) each bind ADP. Residues Glu223, Arg244, and 250 to 253 (HIQR) contribute to the substrate site.

It belongs to the phosphofructokinase type A (PFKA) family. ATP-dependent PFK group I subfamily. Prokaryotic clade 'B1' sub-subfamily. Homotetramer. Requires Mg(2+) as cofactor.

The protein localises to the cytoplasm. The catalysed reaction is beta-D-fructose 6-phosphate + ATP = beta-D-fructose 1,6-bisphosphate + ADP + H(+). It participates in carbohydrate degradation; glycolysis; D-glyceraldehyde 3-phosphate and glycerone phosphate from D-glucose: step 3/4. Allosterically activated by ADP and other diphosphonucleosides, and allosterically inhibited by phosphoenolpyruvate. Functionally, catalyzes the phosphorylation of D-fructose 6-phosphate to fructose 1,6-bisphosphate by ATP, the first committing step of glycolysis. This Escherichia fergusonii (strain ATCC 35469 / DSM 13698 / CCUG 18766 / IAM 14443 / JCM 21226 / LMG 7866 / NBRC 102419 / NCTC 12128 / CDC 0568-73) protein is ATP-dependent 6-phosphofructokinase.